The sequence spans 252 residues: Pyridoxine 5'-phosphate synthase (252 aa).

Asparagine 7 serves as a coordination point for 3-amino-2-oxopropyl phosphate. 1-deoxy-D-xylulose 5-phosphate is bound at residue aspartate 9–histidine 10. Residue arginine 18 coordinates 3-amino-2-oxopropyl phosphate. Residue histidine 43 is the Proton acceptor of the active site. 1-deoxy-D-xylulose 5-phosphate is bound by residues arginine 45 and histidine 50. Glutamate 70 serves as the catalytic Proton acceptor. Threonine 100 is a binding site for 1-deoxy-D-xylulose 5-phosphate. Histidine 190 functions as the Proton donor in the catalytic mechanism. Residues glycine 191 and glycine 212–histidine 213 each bind 3-amino-2-oxopropyl phosphate.

It belongs to the PNP synthase family. In terms of assembly, homooctamer; tetramer of dimers.

It localises to the cytoplasm. The catalysed reaction is 3-amino-2-oxopropyl phosphate + 1-deoxy-D-xylulose 5-phosphate = pyridoxine 5'-phosphate + phosphate + 2 H2O + H(+). The protein operates within cofactor biosynthesis; pyridoxine 5'-phosphate biosynthesis; pyridoxine 5'-phosphate from D-erythrose 4-phosphate: step 5/5. Functionally, catalyzes the complicated ring closure reaction between the two acyclic compounds 1-deoxy-D-xylulose-5-phosphate (DXP) and 3-amino-2-oxopropyl phosphate (1-amino-acetone-3-phosphate or AAP) to form pyridoxine 5'-phosphate (PNP) and inorganic phosphate. In Synechococcus sp. (strain RCC307), this protein is Pyridoxine 5'-phosphate synthase.